We begin with the raw amino-acid sequence, 404 residues long: Nicotinate phosphoribosyltransferase (404 aa).

The residue at position 225 (His-225) is a Phosphohistidine; by autocatalysis.

This sequence belongs to the NAPRTase family. Post-translationally, transiently phosphorylated on a His residue during the reaction cycle. Phosphorylation strongly increases the affinity for substrates and increases the rate of nicotinate D-ribonucleotide production. Dephosphorylation regenerates the low-affinity form of the enzyme, leading to product release.

It catalyses the reaction nicotinate + 5-phospho-alpha-D-ribose 1-diphosphate + ATP + H2O = nicotinate beta-D-ribonucleotide + ADP + phosphate + diphosphate. It functions in the pathway cofactor biosynthesis; NAD(+) biosynthesis; nicotinate D-ribonucleotide from nicotinate: step 1/1. In terms of biological role, catalyzes the synthesis of beta-nicotinate D-ribonucleotide from nicotinate and 5-phospho-D-ribose 1-phosphate at the expense of ATP. This Acinetobacter baumannii (strain ATCC 17978 / DSM 105126 / CIP 53.77 / LMG 1025 / NCDC KC755 / 5377) protein is Nicotinate phosphoribosyltransferase.